The sequence spans 344 residues: MDIKAQLLQLKEEIKKEVQDIFDEKVLNEIKVKYLGKKGLITSVLKSLGSLSPEERKEVGQLANSIKEFLEEALKAKQEEIEKKKLEEILRKERLDISLPAEWFEPSASHPVLTTLKEITEIFKSMGFTVESGPEVEYEDYNFTMLNIPEHHPARDMQDTFYTSNGMLLRTHTSPVQIRSMLKKKPPIAIVAPGRVYRKDMDPTHSPMFHQIEGLMVDKNVSFKDLKGILKIFLENIFGKDIPIRFRPSYFPFTEPSAEVDVGCTVCKGKGCRVCKNTGWLEILGCGMVDPNVFKAVGIGPEDYTGFAFGLGIERIAMLRYQITDIRLLFTNDLRFNLQFRGIE.

Glu255 lines the Mg(2+) pocket.

The protein belongs to the class-II aminoacyl-tRNA synthetase family. Phe-tRNA synthetase alpha subunit type 1 subfamily. In terms of assembly, tetramer of two alpha and two beta subunits. It depends on Mg(2+) as a cofactor.

Its subcellular location is the cytoplasm. The enzyme catalyses tRNA(Phe) + L-phenylalanine + ATP = L-phenylalanyl-tRNA(Phe) + AMP + diphosphate + H(+). This Sulfurihydrogenibium sp. (strain YO3AOP1) protein is Phenylalanine--tRNA ligase alpha subunit.